The chain runs to 463 residues: ATP-dependent protease ATPase subunit HslU (463 aa).

ATP contacts are provided by residues Ile-19, 61–66 (GVGKTE), Asp-277, Glu-341, and Arg-413.

Belongs to the ClpX chaperone family. HslU subfamily. A double ring-shaped homohexamer of HslV is capped on each side by a ring-shaped HslU homohexamer. The assembly of the HslU/HslV complex is dependent on binding of ATP.

Its subcellular location is the cytoplasm. Functionally, ATPase subunit of a proteasome-like degradation complex; this subunit has chaperone activity. The binding of ATP and its subsequent hydrolysis by HslU are essential for unfolding of protein substrates subsequently hydrolyzed by HslV. HslU recognizes the N-terminal part of its protein substrates and unfolds these before they are guided to HslV for hydrolysis. This Bacillus anthracis (strain A0248) protein is ATP-dependent protease ATPase subunit HslU.